The primary structure comprises 336 residues: Neuropeptides B/W receptor type 2 (336 aa).

A disordered region spans residues 1 to 25; that stretch reads MMEATGLEGLESTSSPCPGSTGTGL. Residues 1-45 are Extracellular-facing; that stretch reads MMEATGLEGLESTSSPCPGSTGTGLSWDNGTRHNATFPEPLPALY. Residues 12-25 are compositionally biased toward low complexity; sequence STSSPCPGSTGTGL. Residues asparagine 29 and asparagine 34 are each glycosylated (N-linked (GlcNAc...) asparagine). Residues 46–68 form a helical membrane-spanning segment; sequence VLLPVVYSVICAVGLVGNAAVIC. Over 69-80 the chain is Cytoplasmic; it reads VILRAPKMKTVT. A helical transmembrane segment spans residues 81–103; it reads HVFILNLAIADGLFTLVLPTNIA. Over 104 to 127 the chain is Extracellular; sequence EHLLQRWPFGEVLCKLVLAIDHCN. Residues cysteine 117 and cysteine 197 are joined by a disulfide bond. A helical membrane pass occupies residues 128 to 146; that stretch reads IFSSVYFLAAMSIDRYLVV. At 147–165 the chain is on the cytoplasmic side; sequence LATARSRRMPRRTVHRAKV. The chain crosses the membrane as a helical span at residues 166 to 188; sequence ASLCVWLGVTVAVLPFLTFAGVY. The Extracellular segment spans residues 189–213; sequence NNELQVTSCGLSFPRPERAWFQASR. The chain crosses the membrane as a helical span at residues 214–236; the sequence is IYTLVLGFVVPMCTLCVLYADLL. Over 237 to 256 the chain is Cytoplasmic; the sequence is RRLRALRLHSGAKALGKAKR. Residues 257–279 traverse the membrane as a helical segment; it reads KVSLLVLAVLAVGLLCWTPFHLA. The Extracellular portion of the chain corresponds to 280–293; that stretch reads SIVALTTDLPQTPL. Residues 294 to 316 form a helical membrane-spanning segment; that stretch reads VIIVSYVVTSLSYTSSCLNPFLY. Topologically, residues 317 to 336 are cytoplasmic; that stretch reads AFLDHSFRKSLRTACRCQGA.

It belongs to the G-protein coupled receptor 1 family.

The protein localises to the cell membrane. Its function is as follows. Interacts specifically with a number of opioid ligands. Receptor for neuropeptides B and W, which may be involved in neuroendocrine system regulation, food intake and the organization of other signals. The polypeptide is Neuropeptides B/W receptor type 2 (NPBWR2) (Bos taurus (Bovine)).